A 179-amino-acid polypeptide reads, in one-letter code: NADH dehydrogenase [ubiquinone] 1 beta subcomplex subunit 9 (179 aa).

The residue at position 2 (alanine 2) is an N-acetylalanine. The residue at position 85 (serine 85) is a Phosphoserine.

Belongs to the complex I LYR family. In terms of assembly, mammalian complex I is composed of 45 different subunits.

Its subcellular location is the mitochondrion inner membrane. Its function is as follows. Accessory subunit of the mitochondrial membrane respiratory chain NADH dehydrogenase (Complex I), that is believed to be not involved in catalysis. Complex I functions in the transfer of electrons from NADH to the respiratory chain. The immediate electron acceptor for the enzyme is believed to be ubiquinone. The chain is NADH dehydrogenase [ubiquinone] 1 beta subcomplex subunit 9 (Ndufb9) from Mus musculus (Mouse).